A 437-amino-acid chain; its full sequence is UDP-N-acetylmuramate--L-alanine ligase (437 aa).

108 to 114 (GAHGKTS) is an ATP binding site.

This sequence belongs to the MurCDEF family.

It is found in the cytoplasm. The catalysed reaction is UDP-N-acetyl-alpha-D-muramate + L-alanine + ATP = UDP-N-acetyl-alpha-D-muramoyl-L-alanine + ADP + phosphate + H(+). Its pathway is cell wall biogenesis; peptidoglycan biosynthesis. Cell wall formation. The polypeptide is UDP-N-acetylmuramate--L-alanine ligase (Staphylococcus haemolyticus (strain JCSC1435)).